A 139-amino-acid chain; its full sequence is Ubiquitin-conjugating enzyme spm2 (139 aa).

The region spanning 5–139 is the UBC core domain; the sequence is PRNFKLLEEL…PQPPEGSTFF (135 aa).

This sequence belongs to the ubiquitin-conjugating enzyme family. In terms of assembly, heterodimer with ubc13.

In terms of biological role, has a role in the DNA error-free postreplication repair (PRR) pathway. Lacks catalytic activity by itself. The ubc13/spm2 heterodimer catalyzes the synthesis of non-canonical poly-ubiquitin chains that are linked through 'Lys-63'. This chain is Ubiquitin-conjugating enzyme spm2 (spm2), found in Schizosaccharomyces pombe (strain 972 / ATCC 24843) (Fission yeast).